The following is a 210-amino-acid chain: Putative protein-lysine deacylase ABHD14B (210 aa).

At Ala-2 the chain carries N-acetylalanine. At Ser-91 the chain carries Phosphoserine. Catalysis depends on charge relay system residues Ser-111, Asp-162, and His-188.

It belongs to the AB hydrolase superfamily. ABHD14 family. May interact with TAF1. In terms of tissue distribution, ubiquitous. Detected in spleen, thymus, prostate, testis, ovary, small intestine, colon, peripheral blood leukocyte, heart, placenta, lung, liver, skeletal muscle, pancreas and kidney.

The protein localises to the cytoplasm. The protein resides in the nucleus. It carries out the reaction L-lysyl-[protein] + acetyl-CoA = N(6)-acetyl-L-lysyl-[protein] + CoA + H(+). Acts as an atypical protein-lysine deacetylase in vitro. Catalyzes the deacetylation of lysine residues using CoA as substrate, generating acetyl-CoA and the free amine of protein-lysine residues. Additional experiments are however required to confirm the protein-lysine deacetylase activity in vivo. Has hydrolase activity towards various surrogate p-nitrophenyl (pNp) substrates, such as pNp-butyrate, pNp-acetate and pNp-octanoate in vitro, with a strong preference for pNp-acetate. May activate transcription. In Homo sapiens (Human), this protein is Putative protein-lysine deacylase ABHD14B.